The chain runs to 607 residues: Elongation factor 4 (607 aa).

Residues 11–193 (KSIRNFSIIA…QIVAKVPAPT (183 aa)) enclose the tr-type G domain. GTP is bound by residues 23–28 (DHGKST) and 140–143 (NKID).

This sequence belongs to the TRAFAC class translation factor GTPase superfamily. Classic translation factor GTPase family. LepA subfamily.

The protein resides in the cell membrane. It carries out the reaction GTP + H2O = GDP + phosphate + H(+). Its function is as follows. Required for accurate and efficient protein synthesis under certain stress conditions. May act as a fidelity factor of the translation reaction, by catalyzing a one-codon backward translocation of tRNAs on improperly translocated ribosomes. Back-translocation proceeds from a post-translocation (POST) complex to a pre-translocation (PRE) complex, thus giving elongation factor G a second chance to translocate the tRNAs correctly. Binds to ribosomes in a GTP-dependent manner. This chain is Elongation factor 4, found in Exiguobacterium sibiricum (strain DSM 17290 / CCUG 55495 / CIP 109462 / JCM 13490 / 255-15).